Reading from the N-terminus, the 141-residue chain is Large ribosomal subunit protein uL11 (141 aa).

Belongs to the universal ribosomal protein uL11 family. As to quaternary structure, part of the ribosomal stalk of the 50S ribosomal subunit. Interacts with L10 and the large rRNA to form the base of the stalk. L10 forms an elongated spine to which L12 dimers bind in a sequential fashion forming a multimeric L10(L12)X complex. In terms of processing, one or more lysine residues are methylated.

Its function is as follows. Forms part of the ribosomal stalk which helps the ribosome interact with GTP-bound translation factors. The chain is Large ribosomal subunit protein uL11 from Bacillus cereus (strain ATCC 10987 / NRS 248).